The following is a 170-amino-acid chain: Fibroblast growth factor 2 (170 aa).

Positions 1 to 21 (VGGRGRGRGTAAAARREPGGA) are disordered. An omega-N-methylarginine; alternate mark is found at Arg4, Arg6, and Arg8. Arg4, Arg6, and Arg8 each carry symmetric dimethylarginine; alternate. Residues 9 to 21 (GTAAAARREPGGA) show a composition bias toward low complexity. Asn51 serves as a coordination point for heparin. Position 97 is a phosphotyrosine; by TEC (Tyr97). A Glycyl lysine isopeptide (Lys-Gly) (interchain with G-Cter in SUMO1) cross-link involves residue Lys110. Residues 143 to 159 (KRTGQYKLGSKTGPGQK) are heparin-binding.

Belongs to the heparin-binding growth factors family. Monomer. Homodimer. Interacts with FGFR1, FGFR2, FGFR3 and FGFR4. Affinity between fibroblast growth factors (FGFs) and their receptors is increased by heparan sulfate glycosaminoglycans that function as coreceptors. Interacts with CSPG4, FGFBP1 and TEC. Found in a complex with FGFBP1, FGF1 and FGF2. Interacts with FGFBP3. Interacts with integrin ITGAV:ITGB3; the interaction is required for FGF2 signaling. Interacts with SNORC (via the extracellular domain). Interacts with glypican GPC3. In terms of processing, the N-terminus of isoform 2 is blocked. Post-translationally, phosphorylation at Tyr-97 regulates FGF2 unconventional secretion.

It localises to the secreted. It is found in the nucleus. In terms of biological role, acts as a ligand for FGFR1, FGFR2, FGFR3 and FGFR4. Also acts as an integrin ligand which is required for FGF2 signaling. Binds to integrin ITGAV:ITGB3. Plays an important role in the regulation of cell survival, cell division, cell differentiation and cell migration. Functions as a potent mitogen in vitro. Can induce angiogenesis. Mediates phosphorylation of ERK1/2 and thereby promotes retinal lens fiber differentiation. This Cavia porcellus (Guinea pig) protein is Fibroblast growth factor 2 (FGF2).